We begin with the raw amino-acid sequence, 98 residues long: Large ribosomal subunit protein uL23 (98 aa).

It belongs to the universal ribosomal protein uL23 family. As to quaternary structure, part of the 50S ribosomal subunit. Contacts protein L29, and trigger factor when it is bound to the ribosome.

Its function is as follows. One of the early assembly proteins it binds 23S rRNA. One of the proteins that surrounds the polypeptide exit tunnel on the outside of the ribosome. Forms the main docking site for trigger factor binding to the ribosome. This is Large ribosomal subunit protein uL23 from Herpetosiphon aurantiacus (strain ATCC 23779 / DSM 785 / 114-95).